The chain runs to 201 residues: Large ribosomal subunit protein uL4 (201 aa).

The segment at 44–71 (RAQKTRAEVTGSGKKPWRQKGTGRARSG) is disordered.

Belongs to the universal ribosomal protein uL4 family. Part of the 50S ribosomal subunit.

Functionally, one of the primary rRNA binding proteins, this protein initially binds near the 5'-end of the 23S rRNA. It is important during the early stages of 50S assembly. It makes multiple contacts with different domains of the 23S rRNA in the assembled 50S subunit and ribosome. In terms of biological role, forms part of the polypeptide exit tunnel. The polypeptide is Large ribosomal subunit protein uL4 (Edwardsiella ictaluri (strain 93-146)).